A 279-amino-acid polypeptide reads, in one-letter code: Probable phosphatase phospho1 (279 aa).

D41 acts as the Nucleophile in catalysis. Mg(2+)-binding residues include D41 and D43. The active-site Proton donor is the D43. Substrate is bound by residues D52 and D133. D215 contacts Mg(2+).

It belongs to the HAD-like hydrolase superfamily. PHOSPHO family. Requires Mg(2+) as cofactor.

The protein resides in the extracellular vesicle. The catalysed reaction is phosphoethanolamine + H2O = ethanolamine + phosphate. The enzyme catalyses phosphocholine + H2O = choline + phosphate. Its function is as follows. Phosphatase that has a high activity toward phosphoethanolamine (PEA) and phosphocholine (PCho). Involved in the generation of inorganic phosphate for bone mineralization. The chain is Probable phosphatase phospho1 (phospho1) from Danio rerio (Zebrafish).